A 72-amino-acid chain; its full sequence is Long neurotoxin OH-17 (72 aa).

Cystine bridges form between Cys3-Cys21, Cys14-Cys42, Cys27-Cys31, Cys46-Cys57, and Cys58-Cys63.

This sequence belongs to the three-finger toxin family. Long-chain subfamily. Type II alpha-neurotoxin sub-subfamily. As to expression, expressed by the venom gland.

Its subcellular location is the secreted. Binds with high affinity to muscular (alpha-1/CHRNA1) and neuronal (alpha-7/CHRNA7) nicotinic acetylcholine receptor (nAChR) and inhibits acetylcholine from binding to the receptor, thereby impairing neuromuscular and neuronal transmission. This is Long neurotoxin OH-17 from Ophiophagus hannah (King cobra).